We begin with the raw amino-acid sequence, 449 residues long: Phosphoglucosamine mutase (449 aa).

S104 serves as the catalytic Phosphoserine intermediate. Positions 104, 243, 245, and 247 each coordinate Mg(2+). Residue S104 is modified to Phosphoserine.

Belongs to the phosphohexose mutase family. Requires Mg(2+) as cofactor. Post-translationally, activated by phosphorylation.

The catalysed reaction is alpha-D-glucosamine 1-phosphate = D-glucosamine 6-phosphate. Functionally, catalyzes the conversion of glucosamine-6-phosphate to glucosamine-1-phosphate. This chain is Phosphoglucosamine mutase, found in Xanthomonas axonopodis pv. citri (strain 306).